Here is a 502-residue protein sequence, read N- to C-terminus: Serine/threonine-protein kinase SKS1 (502 aa).

Residues 10 to 338 (FRITAQIGSG…SEVSSLTSFT (329 aa)) enclose the Protein kinase domain. Residues 16–24 (IGSGAYGLV) and Lys39 each bind ATP. Residue Asp186 is the Proton acceptor of the active site. 2 stretches are compositionally biased toward low complexity: residues 376 to 391 (QEQQ…QVQE) and 399 to 410 (EQIQNQEQAQQQ). The disordered stretch occupies residues 376–439 (QEQQQQQQQQ…GSMEKYEYTN (64 aa)). Over residues 411 to 420 (QEEEDAEPES) the composition is skewed to acidic residues.

Belongs to the protein kinase superfamily. Ser/Thr protein kinase family.

The catalysed reaction is L-seryl-[protein] + ATP = O-phospho-L-seryl-[protein] + ADP + H(+). It carries out the reaction L-threonyl-[protein] + ATP = O-phospho-L-threonyl-[protein] + ADP + H(+). In terms of biological role, may have a role in glucose regulation. The chain is Serine/threonine-protein kinase SKS1 (SKS1) from Saccharomyces cerevisiae (strain ATCC 204508 / S288c) (Baker's yeast).